Here is a 191-residue protein sequence, read N- to C-terminus: Protein GrpE (191 aa).

The interval 1–49 (MSEEKQTAEQVEAAEQEEVTEQAEQAASQEQHEETAGQEEALQHQIDEL) is disordered. Positions 12 to 21 (EAAEQEEVTE) are enriched in acidic residues. Residues 30-49 (EQHEETAGQEEALQHQIDEL) show a composition bias toward basic and acidic residues.

This sequence belongs to the GrpE family. Homodimer.

It is found in the cytoplasm. Its function is as follows. Participates actively in the response to hyperosmotic and heat shock by preventing the aggregation of stress-denatured proteins, in association with DnaK and GrpE. It is the nucleotide exchange factor for DnaK and may function as a thermosensor. Unfolded proteins bind initially to DnaJ; upon interaction with the DnaJ-bound protein, DnaK hydrolyzes its bound ATP, resulting in the formation of a stable complex. GrpE releases ADP from DnaK; ATP binding to DnaK triggers the release of the substrate protein, thus completing the reaction cycle. Several rounds of ATP-dependent interactions between DnaJ, DnaK and GrpE are required for fully efficient folding. In Bacillus velezensis (strain DSM 23117 / BGSC 10A6 / LMG 26770 / FZB42) (Bacillus amyloliquefaciens subsp. plantarum), this protein is Protein GrpE.